The sequence spans 204 residues: Putative 3-methyladenine DNA glycosylase (204 aa).

The protein belongs to the DNA glycosylase MPG family.

This chain is Putative 3-methyladenine DNA glycosylase, found in Mycobacterium sp. (strain KMS).